The sequence spans 188 residues: dCTP deaminase (188 aa).

Residues 111 to 116 (KSTYAR), 135 to 137 (TLE), Gln-156, Tyr-170, and Gln-180 each bind dCTP. Glu-137 functions as the Proton donor/acceptor in the catalytic mechanism.

The protein belongs to the dCTP deaminase family. As to quaternary structure, homotrimer.

The catalysed reaction is dCTP + H2O + H(+) = dUTP + NH4(+). It participates in pyrimidine metabolism; dUMP biosynthesis; dUMP from dCTP (dUTP route): step 1/2. In terms of biological role, catalyzes the deamination of dCTP to dUTP. This Cupriavidus taiwanensis (strain DSM 17343 / BCRC 17206 / CCUG 44338 / CIP 107171 / LMG 19424 / R1) (Ralstonia taiwanensis (strain LMG 19424)) protein is dCTP deaminase.